A 239-amino-acid polypeptide reads, in one-letter code: Ribosomal RNA small subunit methyltransferase G (239 aa).

S-adenosyl-L-methionine-binding positions include Gly78, Phe83, 129 to 130, and Arg148; that span reads AE.

The protein belongs to the methyltransferase superfamily. RNA methyltransferase RsmG family.

The protein localises to the cytoplasm. Specifically methylates the N7 position of a guanine in 16S rRNA. The polypeptide is Ribosomal RNA small subunit methyltransferase G (Clostridium botulinum (strain Loch Maree / Type A3)).